The primary structure comprises 307 residues: Polysialic acid O-acetyltransferase (307 aa).

A compositionally biased stretch (basic and acidic residues) spans Met1 to Thr90. The interval Met1–Ser95 is disordered. 13 consecutive repeat copies span residues Arg3–Ser9, Arg10–Ser16, Arg17–Ser23, Arg24–Ser30, Arg31–Ser37, Arg38–Ser44, Arg45–Ser51, Arg52–Ser58, Arg59–Ser65, Arg66–Ser72, Arg73–Ser79, Arg80–Ser86, and Arg87–Ser93. The tract at residues Arg3 to Ser93 is 13 X 7 AA tandem repeat of RLKTQDS encoded by a 7 nucleotide repeat. Residues Asp208–His210, Arg237, Lys243, Lys261, and Lys278 each bind acetyl-CoA.

It belongs to the transferase hexapeptide repeat family. Homotrimer. Hexamer formed by two homotrimers.

The enzyme catalyses [N-acetyl-alpha-D-neuraminosyl-(2-&gt;8)](n) + n acetyl-CoA = [N,O(9)-diacetyl-alpha-D-neuraminosyl-(2-&gt;8)](n) + n CoA. The catalysed reaction is [N-acetyl-alpha-D-neuraminosyl-(2-&gt;8)](n) + n acetyl-CoA = [O(7),N-diacetyl-alpha-D-neuraminosyl-(2-&gt;8)](n) + n CoA. Catalyzes the O-acetylation of capsular polymeric sialic acid. Shows high substrate specificity toward polymers of sialic acid that contains a large number of residues. In Escherichia coli O1:K1 / APEC, this protein is Polysialic acid O-acetyltransferase.